Reading from the N-terminus, the 234-residue chain is Sugar fermentation stimulation protein homolog (234 aa).

Belongs to the SfsA family.

This is Sugar fermentation stimulation protein homolog from Citrobacter koseri (strain ATCC BAA-895 / CDC 4225-83 / SGSC4696).